The following is a 155-amino-acid chain: Lectin-like protein EP153R (155 aa).

At 1-30 the chain is on the cytoplasmic side; it reads MYFKKKYIGLIDKNCEKKILDDCTTIKICY. Residues 31 to 51 traverse the membrane as a helical segment; that stretch reads ILIGILIGTNMITLIYNFIFW. At 52–155 the chain is on the extracellular side; that stretch reads DHYMTCNKKD…YLPLLFICSK (104 aa). The cysteines at positions 66 and 77 are disulfide-linked. The interval 66 to 154 is lectin-like; sequence CPKDWVGYNN…KYLPLLFICS (89 aa). N-linked (GlcNAc...) asparagine; by host glycans are attached at residues asparagine 82, asparagine 86, asparagine 98, asparagine 104, asparagine 110, asparagine 124, asparagine 130, and asparagine 137. The cysteines at positions 94 and 153 are disulfide-linked.

Belongs to the asfivirus lectin-like protein family. Homodimer.

It localises to the host endoplasmic reticulum membrane. Down-regulates MHC-I expression by impairing the appropriate configuration or presentation into the plasma membrane of the latter. Participates in viral hemadsorption, which may help viral spread. Reduces the transactivating activity of host TP53, thus inhibiting apoptosis. Non-essential for virus growth in swine macrophage cell cultures. The sequence is that of Lectin-like protein EP153R from Ornithodoros (relapsing fever ticks).